Reading from the N-terminus, the 308-residue chain is MGEIKVSPDYNWFRGTVPLKKIIVDDDDSKIWSLYDAGPRSIRCPLIFLPPVSGTADVFFRQILALTGWGYRVIALQYPVYWDHLEFCDGFRKLLDHLQLDKVHLFGASLGGFLAQKFAEYTHKSPRVHSLILCNSFSDTSIFNQTWTANSFWLMPAFMLKKIVLGNFSSGPVDPMMADAIDFMVDRLESLGQSELASRLTLNCQNSYVEPHKIRDIPVTIMDVFGQSALSTEAKEEMYKLYPNARRAHLKTGGNFPYLCRSAEVNLYVQIHLLQFHGTKYAAIDPSMVSAEELEVQKGSLGISQEEQ.

The 73-residue stretch at 87–159 (FCDGFRKLLD…NSFWLMPAFM (73 aa)) folds into the AB hydrolase-1 domain. A Phosphoserine modification is found at Ser304.

This sequence belongs to the AB hydrolase superfamily. In terms of assembly, interacts with CD4. Interacts with ALDH16A1.

It is found in the cytoplasm. Functionally, may play a role as a negative regulatory factor in CD4-dependent T-cell activation. This is Maspardin (SPG21) from Pongo abelii (Sumatran orangutan).